The chain runs to 935 residues: Progesterone receptor (935 aa).

Positions 1 to 164 (MTELKAKGPR…PATQRVLSPL (164 aa)) are AF3; mediates transcriptional activation. The disordered stretch occupies residues 1 to 256 (MTELKAKGPR…AAAGGGAAAV (256 aa)). The modulating, Pro-Rich stretch occupies residues 1–568 (MTELKAKGPR…YSFESLPQKI (568 aa)). The residue at position 20 (Ser20) is a Phosphoserine. An LXXL motif 1 motif is present at residues 55-59 (LDGLL). Ser81 is subject to Phosphoserine. The LXXL motif 2 signature appears at 115–119 (LDTLL). Residues Ser130 and Ser162 each carry the phosphoserine modification. Residues 165-305 (MSRSGGKAGD…LATTTMDFTH (141 aa)) form a mediates transcriptional transrepression region. Residues 183–187 (KVLPR) carry the Nuclear localization signal motif. Residues Ser190 and Ser213 each carry the phosphoserine modification. Residues 220-231 (EVEEEDGSESED) are compositionally biased toward acidic residues. Residues 232–246 (SAGPLLKGKPRALGG) are compositionally biased toward low complexity. A Phosphoserine; by MAPK1 modification is found at Ser294. Residues 328 to 353 (SYDGGAGAASAFAPPRSSPSASSTPV) form a disordered region. Residues 335–350 (AASAFAPPRSSPSASS) are compositionally biased toward low complexity. Residue Ser345 is modified to Phosphoserine; by MAPK. A Glycyl lysine isopeptide (Lys-Gly) (interchain with G-Cter in SUMO); alternate cross-link involves residue Lys388. A Glycyl lysine isopeptide (Lys-Gly) (interchain with G-Cter in ubiquitin); alternate cross-link involves residue Lys388. Ser400 is modified (phosphoserine; by CDK2). Residues 415 to 452 (PDFPLGPPPPLPPRAPPSRPGEAAVTAAPAGASVSSAS) are disordered. The span at 418–433 (PLGPPPPLPPRAPPSR) shows a compositional bias: pro residues. Residues 434-452 (PGEAAVTAAPAGASVSSAS) show a composition bias toward low complexity. Residues 456–548 (STLECILYKA…VYPPYLNYLR (93 aa)) are AF1; mediates transcriptional activation. Residue Lys533 forms a Glycyl lysine isopeptide (Lys-Gly) (interchain with G-Cter in SUMO) linkage. 2 NR C4-type zinc fingers span residues 569-589 (CLIC…CGSC) and 605-629 (CAGR…LRKC). Residues 569–641 (CLICGDEASG…AGMVLGGRKF (73 aa)) constitute a DNA-binding region (nuclear receptor). At Ser678 the chain carries Phosphoserine. In terms of domain architecture, NR LBD spans 681-915 (QDIQLIPPLI…EFPEMMSEVI (235 aa)). The AF2; mediates transcriptional activation stretch occupies residues 689–935 (LINLLVSIEP…MVKPLLFHKK (247 aa)). Progesterone is bound at residue Arg768.

Belongs to the nuclear hormone receptor family. Interacts with SMARD1 and UNC45A. Interacts with CUEDC2; the interaction promotes ubiquitination, decreases sumoylation, and represses transcriptional activity. Interacts with PIAS3; the interaction promotes sumoylation of PR in a hormone-dependent manner, inhibits DNA-binding, and alters nuclear export. Interacts with SP1; the interaction requires ligand-induced phosphorylation on Ser-345 by ERK1/2-MAPK. Interacts with PRMT2. Interacts with NCOA2 and NCOA1. Interacts with KLF9. Interacts with GTF2B. In terms of processing, phosphorylated on multiple serine sites. Several of these sites are hormone-dependent. Phosphorylation on Ser-294 is highly hormone-dependent and modulates ubiquitination and sumoylation on Lys-388. Phosphorylation on Ser-345 also requires induction by hormone. Basal phosphorylation on Ser-81, Ser-162, Ser-190 and Ser-400 is increased in response to progesterone and can be phosphorylated in vitro by the CDK2-A1 complex. Increased levels of phosphorylation on Ser-400 also in the presence of EGF, heregulin, IGF, PMA and FBS. Phosphorylation at this site by CDK2 is ligand-independent, and increases nuclear translocation and transcriptional activity. Phosphorylation at Ser-162 and Ser-294, but not at Ser-190, is impaired during the G(2)/M phase of the cell cycle. Phosphorylation on Ser-345 by ERK1/2 MAPK is required for interaction with SP1. Sumoylation is hormone-dependent and represses transcriptional activity. Sumoylation on all three sites is enhanced by PIAS3. Desumoylated by SENP1. Sumoylation on Lys-388, the main site of sumoylation, is repressed by ubiquitination on the same site, and modulated by phosphorylation at Ser-294. Post-translationally, ubiquitination is hormone-dependent and represses sumoylation on the same site. Promoted by MAPK-mediated phosphorylation on Ser-294. Ubiquitinated by UBR5, leading to its degradation: UBR5 specifically recognizes and binds ligand-bound PGR when it is not associated with coactivators (NCOAs). In presence of NCOAs, the UBR5-degron is not accessible, preventing its ubiquitination and degradation. In terms of processing, palmitoylated by ZDHHC7 and ZDHHC21. Palmitoylation is required for plasma membrane targeting and for rapid intracellular signaling via ERK and AKT kinases and cAMP generation.

It is found in the nucleus. It localises to the cytoplasm. In terms of biological role, the steroid hormones and their receptors are involved in the regulation of eukaryotic gene expression and affect cellular proliferation and differentiation in target tissues. Transcriptional activator of several progesteron-dependent promoters in a variety of cell types. Involved in activation of SRC-dependent MAPK signaling on hormone stimulation. The protein is Progesterone receptor (PGR) of Macaca sylvanus (Barbary macaque).